We begin with the raw amino-acid sequence, 148 residues long: Large ribosomal subunit protein bL9 (148 aa).

It belongs to the bacterial ribosomal protein bL9 family.

In terms of biological role, binds to the 23S rRNA. The sequence is that of Large ribosomal subunit protein bL9 from Pseudomonas putida (strain ATCC 700007 / DSM 6899 / JCM 31910 / BCRC 17059 / LMG 24140 / F1).